We begin with the raw amino-acid sequence, 400 residues long: Nicotinate phosphoribosyltransferase (400 aa).

Phosphohistidine; by autocatalysis is present on H220.

The protein belongs to the NAPRTase family. In terms of processing, transiently phosphorylated on a His residue during the reaction cycle. Phosphorylation strongly increases the affinity for substrates and increases the rate of nicotinate D-ribonucleotide production. Dephosphorylation regenerates the low-affinity form of the enzyme, leading to product release.

It carries out the reaction nicotinate + 5-phospho-alpha-D-ribose 1-diphosphate + ATP + H2O = nicotinate beta-D-ribonucleotide + ADP + phosphate + diphosphate. Its pathway is cofactor biosynthesis; NAD(+) biosynthesis; nicotinate D-ribonucleotide from nicotinate: step 1/1. Catalyzes the synthesis of beta-nicotinate D-ribonucleotide from nicotinate and 5-phospho-D-ribose 1-phosphate at the expense of ATP. The polypeptide is Nicotinate phosphoribosyltransferase (Salmonella schwarzengrund (strain CVM19633)).